The sequence spans 264 residues: Thiazole synthase (264 aa).

Lys-106 (schiff-base intermediate with DXP) is an active-site residue. Residues Gly-167, 193-194, and 215-216 each bind 1-deoxy-D-xylulose 5-phosphate; these read AG and NT.

The protein belongs to the ThiG family. In terms of assembly, homotetramer. Forms heterodimers with either ThiH or ThiS.

Its subcellular location is the cytoplasm. The catalysed reaction is [ThiS sulfur-carrier protein]-C-terminal-Gly-aminoethanethioate + 2-iminoacetate + 1-deoxy-D-xylulose 5-phosphate = [ThiS sulfur-carrier protein]-C-terminal Gly-Gly + 2-[(2R,5Z)-2-carboxy-4-methylthiazol-5(2H)-ylidene]ethyl phosphate + 2 H2O + H(+). Its pathway is cofactor biosynthesis; thiamine diphosphate biosynthesis. Functionally, catalyzes the rearrangement of 1-deoxy-D-xylulose 5-phosphate (DXP) to produce the thiazole phosphate moiety of thiamine. Sulfur is provided by the thiocarboxylate moiety of the carrier protein ThiS. In vitro, sulfur can be provided by H(2)S. This Xylella fastidiosa (strain 9a5c) protein is Thiazole synthase.